The chain runs to 1237 residues: U3 small nucleolar RNA-associated protein 22 (1237 aa).

The tract at residues Met1–Gly78 is disordered. A phosphoserine mark is found at Ser10 and Ser58. Thr60 is subject to Phosphothreonine. The span at Ser61–Gly78 shows a compositional bias: polar residues. The residue at position 64 (Ser64) is a Phosphoserine.

It belongs to the NRAP family. As to quaternary structure, interacts with snoRNA U3. Interacts with MPP10. Component of the ribosomal small subunit (SSU) processome composed of at least 40 protein subunits and snoRNA U3. Interacts with UBP10.

The protein localises to the nucleus. It localises to the nucleolus. Involved in nucleolar processing of pre-18S ribosomal RNA and ribosome assembly. The chain is U3 small nucleolar RNA-associated protein 22 (UTP22) from Saccharomyces cerevisiae (strain ATCC 204508 / S288c) (Baker's yeast).